The following is a 469-amino-acid chain: MKAMEGKIIQVLGPVVDVEFESYLPAIFEALDINFEVNGVQKSLVLEVAAHLGGNRVRAIAMDMTEGLVRNQVIKARGKMIEVPVGEEVLGRIFNVVGESIDNLEPLKPSLTWPIHRKAPSFEQQSTKTEMFETGIKVIDLLAPYSKGGKVGLFGGAGVGKTVIIMELIHNVAYKHNGYSVFAGVGERTREGNDLYFEMKEGGVLDKVALCYGQMNEPPGARNRIAFTGLTMAEYFRDEKGLDVLMFIDNIFRYAQSGAEMSALLGRIPSAVGYQPTLAGEMGKLQERIASTKNGSITSVQAVYVPADDLTDPAPASVFAHLDATTVLNRKIAEKGIYPAVDPLDSTSRILSPQMIGEKHYEVATGIQQVLQKYKDLQDIIAILGLDELSEEDKKTVERARKIEKFLSQPFFVAEVFTGSPGKYVTLQETLEGFGGILEGKYDHIPENAFYMVGSIQEVLEKAKNMKNS.

155 to 162 (GGAGVGKT) contacts ATP.

Belongs to the ATPase alpha/beta chains family. F-type ATPases have 2 components, CF(1) - the catalytic core - and CF(0) - the membrane proton channel. CF(1) has five subunits: alpha(3), beta(3), gamma(1), delta(1), epsilon(1). CF(0) has three main subunits: a(1), b(2) and c(9-12). The alpha and beta chains form an alternating ring which encloses part of the gamma chain. CF(1) is attached to CF(0) by a central stalk formed by the gamma and epsilon chains, while a peripheral stalk is formed by the delta and b chains.

It is found in the cell inner membrane. It catalyses the reaction ATP + H2O + 4 H(+)(in) = ADP + phosphate + 5 H(+)(out). Functionally, produces ATP from ADP in the presence of a proton gradient across the membrane. The catalytic sites are hosted primarily by the beta subunits. In Helicobacter pylori (strain ATCC 700392 / 26695) (Campylobacter pylori), this protein is ATP synthase subunit beta.